The sequence spans 388 residues: Leucine aminopeptidase 1 (388 aa).

The first 19 residues, 1-19 (MKVLTAIALSAIAFTGAVA), serve as a signal peptide directing secretion. Residues 20 to 88 (AVITQEAFLN…YPTLHSASYV (69 aa)) constitute a propeptide that is removed on maturation. Asn-106 and Asn-180 each carry an N-linked (GlcNAc...) asparagine glycan. Residues His-188 and Asp-207 each contribute to the Zn(2+) site. An N-linked (GlcNAc...) asparagine glycan is attached at Asn-232. Zn(2+) is bound by residues Glu-246 and Asp-273. Cys-322 and Cys-326 are oxidised to a cystine. Zn(2+) is bound at residue His-355.

This sequence belongs to the peptidase M28 family. M28E subfamily. In terms of assembly, monomer. Zn(2+) is required as a cofactor.

The protein localises to the secreted. Extracellular aminopeptidase that allows assimilation of proteinaceous substrates and which contributes to pathogenicity. The protein is Leucine aminopeptidase 1 (lap1) of Aspergillus fumigatus (strain CBS 144.89 / FGSC A1163 / CEA10) (Neosartorya fumigata).